Reading from the N-terminus, the 178-residue chain is Interleukin-17B (178 aa).

An N-terminal signal peptide occupies residues 1-22; sequence MDWPHSLLFLLAISIFLGPSQP. Residues 21-44 are disordered; that stretch reads QPRNTKGKRKGQVRPGPLAPGPHQ. Asparagine 75 carries an N-linked (GlcNAc...) asparagine glycan. 2 disulfide bridges follow: cysteine 121–cysteine 176 and cysteine 126–cysteine 178.

This sequence belongs to the IL-17 family.

The protein resides in the secreted. In terms of biological role, stimulates the release of tumor necrosis factor alpha and IL-1-beta from the monocytic cell line THP-1. The protein is Interleukin-17B (IL17B) of Mesocricetus auratus (Golden hamster).